Consider the following 205-residue polypeptide: Inactive ribonuclease-like protein 9 (205 aa).

Residues 1–26 (MMRTLITTHPLPLLLLPQQLLQLVQF) form the signal peptide. Cystine bridges form between Cys116–Cys168 and Cys123–Cys130. Asn131 and Asn143 each carry an N-linked (GlcNAc...) asparagine glycan.

Belongs to the pancreatic ribonuclease family. At the mRNA level, widely expressed. At protein level, restricted to epididymis. Expressed in spermatozoa (sperm head and neck), with higher levels on ejaculated and epididymal sperm than on testicular sperm (at protein level). Expressed in the epithelial cells of the epididymal tubule (at protein level). Not detected in muscle.

The protein resides in the secreted. Does not exhibit any ribonuclease activity. The chain is Inactive ribonuclease-like protein 9 (RNASE9) from Homo sapiens (Human).